The primary structure comprises 155 residues: 2-C-methyl-D-erythritol 2,4-cyclodiphosphate synthase (155 aa).

A divalent metal cation-binding residues include D10, H12, and H46. 10-12 (DSH) contributes to the 4-CDP-2-C-methyl-D-erythritol 2-phosphate binding site. 4-CDP-2-C-methyl-D-erythritol 2-phosphate is bound by residues 60 to 62 (DIG), 65 to 69 (FDEND), and K140.

It belongs to the IspF family. Homotrimer. A divalent metal cation serves as cofactor.

The catalysed reaction is 4-CDP-2-C-methyl-D-erythritol 2-phosphate = 2-C-methyl-D-erythritol 2,4-cyclic diphosphate + CMP. It functions in the pathway isoprenoid biosynthesis; isopentenyl diphosphate biosynthesis via DXP pathway; isopentenyl diphosphate from 1-deoxy-D-xylulose 5-phosphate: step 4/6. Its function is as follows. Involved in the biosynthesis of isopentenyl diphosphate (IPP) and dimethylallyl diphosphate (DMAPP), two major building blocks of isoprenoid compounds. Catalyzes the conversion of 4-diphosphocytidyl-2-C-methyl-D-erythritol 2-phosphate (CDP-ME2P) to 2-C-methyl-D-erythritol 2,4-cyclodiphosphate (ME-CPP) with a corresponding release of cytidine 5-monophosphate (CMP). This is 2-C-methyl-D-erythritol 2,4-cyclodiphosphate synthase from Mycoplasmoides gallisepticum (strain R(low / passage 15 / clone 2)) (Mycoplasma gallisepticum).